The chain runs to 724 residues: MTNRWDPGVTRALAEARHGDAFAVLGAHPSTNGRLLRTYHPGAEHVTAVLADGREVPLEAGPEPGLFAGELPAEGRYRLRIGWPGGTQDTADPYAFGPLLSDFDLHLISEGHHLQLADALGANAVEVDGVRGTRFAVWAPNASRVAVVGDFNSWDARRHPMRLRHQAGVWELFVPDVGPGAHYKYQLRGPHGHELPAKADPVARRAELAPGTASIVADPTPHQWSDDGWMATRARRQAHDAPMSIYEIHAGSWLREEGLDLDWDGLADRLIPYVADMGFTHVELMPVTEHPFGGSWGYQPLGLFAPTARFGSPDGFARFVDRCHREGIGVIVDWVPAHFPTDAHGLAHFDGTALYEHADPREGFHRDWNTLIYNHGRREVSGFLIASALEFLQRYHVDGLRVDAVASMLYRDYSRNAGEWVPNIHGGRENYETIAFLRRLNEVVREHAPGAVTIAEESTAWPGVTADVSHGGLGFHYKWNMGWMHDTLHYIGLDPIYRRYHHGELTFSMVYAYSERFVLPISHDEVVHGKGSLLGRMPGDDWQRFANLRAYLGFMFTHPGRKLLFMGCEFGQPTEWNHDAGLPWHLLDDARHRGVQTLVRDLNHLYAQYPALHAHDDDPSGFAWLVGDDAANSVVAFLRKGKRGDAPVLVVINYTPVVQQGYRLGVPQGGLWREVFNSDAGIYGGANLGNGGAVTAEPQSMHGHAQSLPLLLPPLGVIVLAPQG.

Catalysis depends on Asp-403, which acts as the Nucleophile. Catalysis depends on Glu-456, which acts as the Proton donor.

The protein belongs to the glycosyl hydrolase 13 family. GlgB subfamily. In terms of assembly, monomer.

It catalyses the reaction Transfers a segment of a (1-&gt;4)-alpha-D-glucan chain to a primary hydroxy group in a similar glucan chain.. Its pathway is glycan biosynthesis; glycogen biosynthesis. Catalyzes the formation of the alpha-1,6-glucosidic linkages in glycogen by scission of a 1,4-alpha-linked oligosaccharide from growing alpha-1,4-glucan chains and the subsequent attachment of the oligosaccharide to the alpha-1,6 position. The polypeptide is 1,4-alpha-glucan branching enzyme GlgB 1 (Xanthomonas campestris pv. campestris (strain 8004)).